The primary structure comprises 230 residues: PKHD-type hydroxylase PD_1553 (230 aa).

The region spanning 78-182 (RTLPPRFNRY…RIASFFWVQS (105 aa)) is the Fe2OG dioxygenase domain. His-96, Asp-98, and His-163 together coordinate Fe cation. Arg-173 serves as a coordination point for 2-oxoglutarate.

Fe(2+) is required as a cofactor. It depends on L-ascorbate as a cofactor.

The protein is PKHD-type hydroxylase PD_1553 of Xylella fastidiosa (strain Temecula1 / ATCC 700964).